The primary structure comprises 105 residues: Cuticle protein AM1159 (105 aa).

The Chitin-binding type R&amp;R domain occupies 16–81 (DGNFNYNFQT…PESPLLPVGP (66 aa)). Residues 25–46 (TSNGIEDTKTGTPGSQGQSNMQ) form a disordered region.

Arthrodial membrane.

In Cancer pagurus (Rock crab), this protein is Cuticle protein AM1159.